A 400-amino-acid polypeptide reads, in one-letter code: Enoyl-[acyl-carrier-protein] reductase [NADH] (400 aa).

Residues glycine 48 to tyrosine 53, phenylalanine 74 to glutamate 75, aspartate 111 to alanine 112, and leucine 139 to alanine 140 each bind NAD(+). Tyrosine 225 provides a ligand contact to substrate. Catalysis depends on tyrosine 235, which acts as the Proton donor. Residues lysine 244 and valine 273–threonine 275 contribute to the NAD(+) site.

Belongs to the TER reductase family. Monomer.

The catalysed reaction is a 2,3-saturated acyl-[ACP] + NAD(+) = a (2E)-enoyl-[ACP] + NADH + H(+). Its pathway is lipid metabolism; fatty acid biosynthesis. Involved in the final reduction of the elongation cycle of fatty acid synthesis (FAS II). Catalyzes the reduction of a carbon-carbon double bond in an enoyl moiety that is covalently linked to an acyl carrier protein (ACP). The chain is Enoyl-[acyl-carrier-protein] reductase [NADH] from Aliivibrio salmonicida (strain LFI1238) (Vibrio salmonicida (strain LFI1238)).